A 219-amino-acid chain; its full sequence is Pyridoxine/pyridoxamine 5'-phosphate oxidase (219 aa).

Residues 13–16 and Lys-76 each bind substrate; that span reads RVEY. FMN is bound by residues 71–76, 86–87, Lys-93, and Gln-115; these read RSVLCK and FT. Substrate contacts are provided by Tyr-133, Arg-137, and Ser-141. FMN contacts are provided by residues 150 to 151 and Trp-196; that span reads QS. A substrate-binding site is contributed by 202–204; sequence RVH. Arg-206 contributes to the FMN binding site.

Belongs to the pyridoxamine 5'-phosphate oxidase family. Homodimer. The cofactor is FMN.

It carries out the reaction pyridoxamine 5'-phosphate + O2 + H2O = pyridoxal 5'-phosphate + H2O2 + NH4(+). It catalyses the reaction pyridoxine 5'-phosphate + O2 = pyridoxal 5'-phosphate + H2O2. Its pathway is cofactor metabolism; pyridoxal 5'-phosphate salvage; pyridoxal 5'-phosphate from pyridoxamine 5'-phosphate: step 1/1. It functions in the pathway cofactor metabolism; pyridoxal 5'-phosphate salvage; pyridoxal 5'-phosphate from pyridoxine 5'-phosphate: step 1/1. In terms of biological role, catalyzes the oxidation of either pyridoxine 5'-phosphate (PNP) or pyridoxamine 5'-phosphate (PMP) into pyridoxal 5'-phosphate (PLP). This Mycobacterium leprae (strain TN) protein is Pyridoxine/pyridoxamine 5'-phosphate oxidase.